The sequence spans 274 residues: uncharacterized protein (274 aa).

Positions 1–17 (MKKLLAGFLTLSLALAA) are cleaved as a signal peptide. Cys18 carries N-palmitoyl cysteine lipidation. Residue Cys18 is the site of S-diacylglycerol cysteine attachment. Residues 18-169 (CSNGSDDDSS…DANNGASSAN (152 aa)) form a disordered region. Residues 25–76 (DSSKKDDSSKDNQSSDDKSKDSKNDDKKNNDSDKDKDNNSDSDKNSDSKSDD) are compositionally biased toward basic and acidic residues. Low complexity predominate over residues 91-169 (SDNASGSDSS…DANNGASSAN (79 aa)).

Its subcellular location is the cell membrane. This is an uncharacterized protein from Staphylococcus saprophyticus subsp. saprophyticus (strain ATCC 15305 / DSM 20229 / NCIMB 8711 / NCTC 7292 / S-41).